Reading from the N-terminus, the 450-residue chain is MAQFFKAKPNSSKQLSAKLSLSVNQLDHLGAGIAQHQGKVVFIPGALPDETVTVQLTEQKKNYARAKLIKVDTPSSERVEPECPHYHTCGGCDLQHMSLSGQREHKEAALLDIMAKFAGAEGGALSPALTGEGWHYRRRARLATLFDKNTKHLSLGFRAASSSNVVPISQCQVLAKPLSDLIVPFAKLLNQLSAKASLGHLELIAADNGHFAVLRITKALNDKDLAKLSAFAEQHQIHICLQDNEGQFQGVGAELVLPVYQLLDDKAESDAVSLSFTPGNFVQVNGQINKAMVAQAMDWLAPAPDERILDLFCGMGNFSLPLAKMGADVIGVEGVAEMVTQARVNAKANNLDKLTFYHGDLSADLSLEPWMGKIDKLLLDPARAGAFESLQWLKKMKPRKVVYVSCNPASLARDSAVLLERGYRLQQLGLIDMFPQTHHIEAMALFELTK.

Residues 12–70 (SKQLSAKLSLSVNQLDHLGAGIAQHQGKVVFIPGALPDETVTVQLTEQKKNYARAKLIK) enclose the TRAM domain. [4Fe-4S] cluster is bound by residues C83, C89, C92, and C171. Q283, F312, N317, E333, D360, and D380 together coordinate S-adenosyl-L-methionine. C406 functions as the Nucleophile in the catalytic mechanism.

It belongs to the class I-like SAM-binding methyltransferase superfamily. RNA M5U methyltransferase family. RlmD subfamily.

It catalyses the reaction uridine(1939) in 23S rRNA + S-adenosyl-L-methionine = 5-methyluridine(1939) in 23S rRNA + S-adenosyl-L-homocysteine + H(+). Functionally, catalyzes the formation of 5-methyl-uridine at position 1939 (m5U1939) in 23S rRNA. The sequence is that of 23S rRNA (uracil(1939)-C(5))-methyltransferase RlmD from Shewanella baltica (strain OS195).